Consider the following 159-residue polypeptide: Ribosomal RNA large subunit methyltransferase H (159 aa).

Residues leucine 76, glycine 108, and 127-132 each bind S-adenosyl-L-methionine; that span reads FSRMTF.

Belongs to the RNA methyltransferase RlmH family. As to quaternary structure, homodimer.

The protein localises to the cytoplasm. It carries out the reaction pseudouridine(1915) in 23S rRNA + S-adenosyl-L-methionine = N(3)-methylpseudouridine(1915) in 23S rRNA + S-adenosyl-L-homocysteine + H(+). Functionally, specifically methylates the pseudouridine at position 1915 (m3Psi1915) in 23S rRNA. The polypeptide is Ribosomal RNA large subunit methyltransferase H (Bacillus pumilus (strain SAFR-032)).